The sequence spans 203 residues: Urease accessory protein UreG (203 aa).

GTP is bound at residue Gly-14–Thr-21.

The protein belongs to the SIMIBI class G3E GTPase family. UreG subfamily. In terms of assembly, homodimer. UreD, UreF and UreG form a complex that acts as a GTP-hydrolysis-dependent molecular chaperone, activating the urease apoprotein by helping to assemble the nickel containing metallocenter of UreC. The UreE protein probably delivers the nickel.

The protein resides in the cytoplasm. In terms of biological role, facilitates the functional incorporation of the urease nickel metallocenter. This process requires GTP hydrolysis, probably effectuated by UreG. In Sinorhizobium fredii (strain NBRC 101917 / NGR234), this protein is Urease accessory protein UreG.